Consider the following 527-residue polypeptide: Bifunctional purine biosynthesis protein PurH (527 aa).

The MGS-like domain occupies 1–149; the sequence is MASDFLPVRR…KNFARVAVAT (149 aa).

This sequence belongs to the PurH family.

The enzyme catalyses (6R)-10-formyltetrahydrofolate + 5-amino-1-(5-phospho-beta-D-ribosyl)imidazole-4-carboxamide = 5-formamido-1-(5-phospho-D-ribosyl)imidazole-4-carboxamide + (6S)-5,6,7,8-tetrahydrofolate. The catalysed reaction is IMP + H2O = 5-formamido-1-(5-phospho-D-ribosyl)imidazole-4-carboxamide. Its pathway is purine metabolism; IMP biosynthesis via de novo pathway; 5-formamido-1-(5-phospho-D-ribosyl)imidazole-4-carboxamide from 5-amino-1-(5-phospho-D-ribosyl)imidazole-4-carboxamide (10-formyl THF route): step 1/1. It functions in the pathway purine metabolism; IMP biosynthesis via de novo pathway; IMP from 5-formamido-1-(5-phospho-D-ribosyl)imidazole-4-carboxamide: step 1/1. The polypeptide is Bifunctional purine biosynthesis protein PurH (Xanthomonas campestris pv. campestris (strain 8004)).